Here is a 297-residue protein sequence, read N- to C-terminus: uncharacterized protein (297 aa).

The N-terminal stretch at 1-24 is a signal peptide; sequence MRAINKFLITVCIALLASVAVALG. The heme site is built by Cys-58, Cys-61, His-62, Cys-141, Cys-144, His-145, Cys-167, Cys-170, His-171, Cys-223, Cys-226, His-227, Cys-264, Cys-267, and His-268. A disordered region spans residues 277–297; the sequence is TNSVDTWSREGEGAEVQQLPH.

In terms of processing, binds 5 heme groups per subunit.

This is an uncharacterized protein from Archaeoglobus fulgidus (strain ATCC 49558 / DSM 4304 / JCM 9628 / NBRC 100126 / VC-16).